A 262-amino-acid polypeptide reads, in one-letter code: Cytochrome c oxidase subunit 2 (262 aa).

Helical transmembrane passes span 31-51 (HIMF…YVII) and 72-92 (IIWT…SFIL). Residues histidine 175, cysteine 210, glutamate 212, cysteine 214, histidine 218, and methionine 221 each contribute to the Cu cation site. A Mg(2+)-binding site is contributed by glutamate 212.

It belongs to the cytochrome c oxidase subunit 2 family. In terms of assembly, component of the cytochrome c oxidase (complex IV, CIV), a multisubunit enzyme composed of a catalytic core of 3 subunits and several supernumerary subunits. The complex exists as a monomer or a dimer and forms supercomplexes (SCs) in the inner mitochondrial membrane with ubiquinol-cytochrome c oxidoreductase (cytochrome b-c1 complex, complex III, CIII). Requires Cu cation as cofactor.

It is found in the mitochondrion inner membrane. The enzyme catalyses 4 Fe(II)-[cytochrome c] + O2 + 8 H(+)(in) = 4 Fe(III)-[cytochrome c] + 2 H2O + 4 H(+)(out). Functionally, component of the cytochrome c oxidase, the last enzyme in the mitochondrial electron transport chain which drives oxidative phosphorylation. The respiratory chain contains 3 multisubunit complexes succinate dehydrogenase (complex II, CII), ubiquinol-cytochrome c oxidoreductase (cytochrome b-c1 complex, complex III, CIII) and cytochrome c oxidase (complex IV, CIV), that cooperate to transfer electrons derived from NADH and succinate to molecular oxygen, creating an electrochemical gradient over the inner membrane that drives transmembrane transport and the ATP synthase. Cytochrome c oxidase is the component of the respiratory chain that catalyzes the reduction of oxygen to water. Electrons originating from reduced cytochrome c in the intermembrane space (IMS) are transferred via the dinuclear copper A center (CU(A)) of subunit 2 and heme A of subunit 1 to the active site in subunit 1, a binuclear center (BNC) formed by heme A3 and copper B (CU(B)). The BNC reduces molecular oxygen to 2 water molecules using 4 electrons from cytochrome c in the IMS and 4 protons from the mitochondrial matrix. The polypeptide is Cytochrome c oxidase subunit 2 (COX2) (Candida albicans (strain SC5314 / ATCC MYA-2876) (Yeast)).